Here is a 209-residue protein sequence, read N- to C-terminus: High frequency lysogenization protein HflD homolog (209 aa).

The protein belongs to the HflD family.

It localises to the cytoplasm. Its subcellular location is the cell inner membrane. This Saccharophagus degradans (strain 2-40 / ATCC 43961 / DSM 17024) protein is High frequency lysogenization protein HflD homolog.